Reading from the N-terminus, the 156-residue chain is Maintenance of carboxysome distribution protein B (156 aa).

The tract at residues 1–55 is required for interaction with McdA:DNA complex; it reads MSNNALDRLINKQKPKVPPRNDVVSESVSNDIKTQGQQELNTSLPPSDTKATPEE. A disordered region spans residues 1–79; the sequence is MSNNALDRLI…QKPKLSPDTF (79 aa). Positions 24-50 are enriched in polar residues; it reads VSESVSNDIKTQGQQELNTSLPPSDTK. Basic and acidic residues predominate over residues 51–63; it reads ATPEEMPTSHESE. Positions 122 to 156 form a coiled coil; that stretch reads PEELAQVIQLAQERLSQRKAIADYKRAKTMQERFL.

Homodimerizes; may exist in higher order oligomers in solution. Forms a complex with McdA:DNA. Homohexamerizes, interacts with shell components of the carboxysome.

The protein localises to the carboxysome. Functionally, mcdA and McdB together mediate carboxysome (Cb) spacing, size, ultrastructure and probably inheritance in the cell, together they prevent Cb aggregation. McdA is an ATPase that forms dynamic gradients on the nucleoid in response to adapter protein McdB, which associates with carboxysomes. The interplay between McdA gradients on the nucleoid and McdB-bound carboxysomes result in the equal spacing of Cbs along the cell length. Stimulates the ATPase activity of McdA, causing McdA to be released from DNA. Undergoes liquid-liquid phase separation. Incorrect positioning (aggregation) of carboxysomes results in reduced CO(2) fixation by encapsulated ribulose-1,5-bisphosphate carboxylase (RuBisCO, cbbL/cbbS), which leads to slower growth. The sequence is that of Maintenance of carboxysome distribution protein B from Gloeothece citriformis (strain PCC 7424) (Cyanothece sp. (strain PCC 7424)).